Consider the following 553-residue polypeptide: Solute carrier family 22 member 12 (553 aa).

Residues 16–36 (FQLLQAVALVTPILWVTTQNM) traverse the membrane as a helical segment. 3 N-linked (GlcNAc...) asparagine glycosylation sites follow: Asn-56, Asn-102, and Asn-107. The next 11 membrane-spanning stretches (helical) occupy residues 146–166 (PMAQ…CGHA), 182–202 (LVSV…YCLF), 204–224 (FLVA…LMEW), 232–252 (LMMT…GSVA), 260–280 (MLQL…WWLP), 351–371 (FISM…ALDL), 378–398 (IFLL…GSLL), 407–427 (LCQA…ILVP), 435–455 (SSLA…VTIF), 466–486 (MTAV…GPLV), and 495–515 (WLPL…ALLL). Phosphoserine is present on Ser-534.

Belongs to the major facilitator (TC 2.A.1) superfamily. Organic cation transporter (TC 2.A.1.19) family. As to quaternary structure, interacts with PDZK1. N-glycosylated. In terms of tissue distribution, expressed in the proximal tubular epithelial cells in kidney.

The protein resides in the apical cell membrane. The enzyme catalyses urate(out) + (S)-lactate(in) = urate(in) + (S)-lactate(out). It catalyses the reaction nicotinate(in) + urate(out) = nicotinate(out) + urate(in). The catalysed reaction is urate(out) + n chloride(in) = urate(in) + n chloride(out). It carries out the reaction orotate(out) + nicotinate(in) = orotate(in) + nicotinate(out). Electroneutral antiporter that translocates urate across the apical membrane of proximal tubular cells in exchange for monovalent organic or inorganic anions. Involved in renal reabsorption of urate and helps maintaining blood levels of uric acid. Mediates urate uptake by an exchange with organic anions such as (S)-lactate and nicotinate, and inorganic anion Cl(-). Other inorganic anions such as Br(-), I(-) and NO3(-) may also act as counteranions that exchange for urate. Also mediates orotate tubular uptake coupled with nicotinate efflux and to a lesser extent with lactate efflux, therefore displaying a potential role in orotate renal reabsorption. Orotate transport is Cl(-)-dependent. The chain is Solute carrier family 22 member 12 (Slc22a12) from Rattus norvegicus (Rat).